The primary structure comprises 437 residues: GTPase Obg (437 aa).

An Obg domain is found at 2–160 (SMFLDTAKIS…RQLELELKIL (159 aa)). Positions 161–338 (ADVGLVGFPS…LLEATAELLA (178 aa)) constitute an OBG-type G domain. Residues 167–174 (GFPSVGKS), 192–196 (FTTIV), 214–217 (DLPG), 284–287 (NKMD), and 319–321 (SSL) contribute to the GTP site. The Mg(2+) site is built by Ser174 and Thr194. Positions 359–437 (GFAKTEKDFE…IGKFEFEFVD (79 aa)) constitute an OCT domain.

This sequence belongs to the TRAFAC class OBG-HflX-like GTPase superfamily. OBG GTPase family. In terms of assembly, monomer. Requires Mg(2+) as cofactor.

It is found in the cytoplasm. Its function is as follows. An essential GTPase which binds GTP, GDP and possibly (p)ppGpp with moderate affinity, with high nucleotide exchange rates and a fairly low GTP hydrolysis rate. Plays a role in control of the cell cycle, stress response, ribosome biogenesis and in those bacteria that undergo differentiation, in morphogenesis control. The sequence is that of GTPase Obg from Streptococcus pyogenes serotype M2 (strain MGAS10270).